The following is a 195-amino-acid chain: SPI-2 type 3 secretion system translocon protein SctB (195 aa).

A coiled-coil region spans residues 44–80 (KLMELAKKLRDIMRSYNVEKQRLAWELQVNVLQTQMK). Helical transmembrane passes span 90-110 (MITA…GAVG), 115-135 (LIAG…GAGV), and 170-190 (EIMQ…AEIL).

The protein belongs to the SctB/EspB family. As to quaternary structure, the core secretion machinery of the T3SS is composed of approximately 20 different proteins, including cytoplasmic components, a base, an export apparatus and a needle. This subunit is involved in the formation of a pore, called the translocon, in host membrane. May form a complex with SseB and SseC/SctE2. SseB is required for correct localization of SseD/SctB2 on the bacterial cell surface. Binds to the chaperone SseA.

It is found in the secreted. The protein localises to the cell surface. The protein resides in the host membrane. Functionally, component of the type III secretion system 2 (SPI-2 T3SS), also called injectisome, which is used to inject bacterial effector proteins into eukaryotic host cells. SseC/SctE2 and SseD/SctB2 are inserted into the host membrane where they form a pore and allow the translocation of effector proteins into the cytosol of target cells. Its function is as follows. Required for the translocation of SPI-2 effector proteins. Required for systemic Salmonella infection of the mouse. Essential for SpvB-induced actin depolymerization in the host cell cytoplasm. The chain is SPI-2 type 3 secretion system translocon protein SctB from Salmonella typhimurium (strain LT2 / SGSC1412 / ATCC 700720).